The chain runs to 412 residues: Serine hydroxymethyltransferase (412 aa).

Residues leucine 117 and 121 to 123 each bind (6S)-5,6,7,8-tetrahydrofolate; that span reads GHL. Residue lysine 226 is modified to N6-(pyridoxal phosphate)lysine. 349–351 is a binding site for (6S)-5,6,7,8-tetrahydrofolate; it reads SPF.

Belongs to the SHMT family. Homodimer. It depends on pyridoxal 5'-phosphate as a cofactor.

Its subcellular location is the cytoplasm. The enzyme catalyses (6R)-5,10-methylene-5,6,7,8-tetrahydrofolate + glycine + H2O = (6S)-5,6,7,8-tetrahydrofolate + L-serine. It functions in the pathway one-carbon metabolism; tetrahydrofolate interconversion. It participates in amino-acid biosynthesis; glycine biosynthesis; glycine from L-serine: step 1/1. Functionally, catalyzes the reversible interconversion of serine and glycine with tetrahydrofolate (THF) serving as the one-carbon carrier. This reaction serves as the major source of one-carbon groups required for the biosynthesis of purines, thymidylate, methionine, and other important biomolecules. Also exhibits THF-independent aldolase activity toward beta-hydroxyamino acids, producing glycine and aldehydes, via a retro-aldol mechanism. In Lawsonia intracellularis (strain PHE/MN1-00), this protein is Serine hydroxymethyltransferase.